We begin with the raw amino-acid sequence, 475 residues long: MDSSCHNATTKMLATAPARGNMMSTSKPLAFSIERIMARTPEPKALPVPHFLQGALPKGEPKHSLHLNSSIPCMIPFVPVAYDTSPKAGVTGSEPRKASLEAPAAPAAVPSAPAFSCSDLLNCALSLKGDLARDALPLQQYKLVRPRVVNHSSFHAMGALCYLNRGDGPCHPAAGVNIHPVASYFLSSPLHPQPKTYLAERNKLVVPAVEKYPSGVAFKDLSQAQLQHYMKESAQLLSEKIAFKTSDFSRGSPNAKPKVFTCEVCGKVFNAHYNLTRHMPVHTGARPFVCKVCGKGFRQASTLCRHKIIHTQEKPHKCNQCGKAFNRSSTLNTHTRIHAGYKPFVCEFCGKGFHQKGNYKNHKLTHSGEKQFKCNICNKAFHQVYNLTFHMHTHNDKKPFTCPTCGKGFCRNFDLKKHVRKLHDSSLGLARTPAGEPGTEPPPPLPQQPPMTLPPLQPPLPTPGPLQPGLHQGHQ.

Residues 28–43 (PLAFSIERIMARTPEP) carry the Engrailed homology 1 repressor motif. 6 consecutive C2H2-type zinc fingers follow at residues 260–282 (FTCE…MPVH), 288–310 (FVCK…KIIH), 316–338 (HKCN…TRIH), 344–366 (FVCE…KLTH), 372–394 (FKCN…MHTH), and 400–423 (FTCP…RKLH). A disordered region spans residues 428 to 475 (GLARTPAGEPGTEPPPPLPQQPPMTLPPLQPPLPTPGPLQPGLHQGHQ). Over residues 439-466 (TEPPPPLPQQPPMTLPPLQPPLPTPGPL) the composition is skewed to pro residues.

This sequence belongs to the krueppel C2H2-type zinc-finger protein family. In terms of tissue distribution, expressed in brain. Little or no expression in other tissues. Overexpressed specifically in gastric cancers. A 2- to 20-fold increase is found in over 50% of gastric cancer tissues.

The protein resides in the nucleus. Transcription repressor. Involved in the axonal projection and proper termination of olfactory sensory neurons (OSN). Plays a role in rostro-caudal patterning of the diencephalon and in prethalamic formation. Expression is required in OSN to cell-autonomously regulate OSN axon projections. Regulates non-cell-autonomously the layer formation of the olfactory bulb development and the interneurons. May be required for correct rostral migration of the interneuron progenitors. This Homo sapiens (Human) protein is Fez family zinc finger protein 1 (FEZF1).